We begin with the raw amino-acid sequence, 683 residues long: Translation factor guf1, mitochondrial (683 aa).

The N-terminal 43 residues, methionine 1–alanine 43, are a transit peptide targeting the mitochondrion. The tr-type G domain maps to glutamate 66–valine 250. Residues alanine 75–serine 82, aspartate 139–histidine 143, and asparagine 193–aspartate 196 each bind GTP.

Belongs to the TRAFAC class translation factor GTPase superfamily. Classic translation factor GTPase family. LepA subfamily.

It is found in the mitochondrion inner membrane. It carries out the reaction GTP + H2O = GDP + phosphate + H(+). Its function is as follows. Promotes mitochondrial protein synthesis. May act as a fidelity factor of the translation reaction, by catalyzing a one-codon backward translocation of tRNAs on improperly translocated ribosomes. Binds to mitochondrial ribosomes in a GTP-dependent manner. This is Translation factor guf1, mitochondrial (guf1) from Aspergillus fumigatus (strain ATCC MYA-4609 / CBS 101355 / FGSC A1100 / Af293) (Neosartorya fumigata).